The chain runs to 240 residues: Mitochondrial transcription rescue factor 1 (240 aa).

A mitochondrion-targeting transit peptide spans Met1–Leu83. Residues Ser92 to Gly127 are disordered. Over residues Ala101–Ser124 the composition is skewed to acidic residues. A phosphoserine mark is found at Ser106 and Ser116. Positions Phe142–Glu217 constitute an S4 RNA-binding domain.

In terms of assembly, monomer. Interacts with POLRMT. Interacts (via S4 domain) with MTRFR (via C-terminus). Associates with mitoribosomal S39 large subunit, peptidyl tRNA and nascent chain.

Its subcellular location is the mitochondrion matrix. Functionally, mitochondrial RNA-binding protein involved in mitochondrial transcription regulation. Functions as a protective factor to maintain proper mitochondrial RNA level during stress. Acts at the transcription level and its protective function depends on its RNA binding ability. Part of a mitoribosome-associated quality control pathway that prevents aberrant translation by responding to interruptions during elongation. As heterodimer with MTRF, ejects the unfinished nascent chain and peptidyl transfer RNA (tRNA), respectively, from stalled ribosomes. Recruitment of mitoribosome biogenesis factors to these quality control intermediates suggests additional roles for MTRES1 and MTRF during mitoribosome rescue. This is Mitochondrial transcription rescue factor 1 (Mtres1) from Mus musculus (Mouse).